The chain runs to 446 residues: tRNA-2-methylthio-N(6)-dimethylallyladenosine synthase (446 aa).

Residues 5-121 form the MTTase N-terminal domain; the sequence is RRFYIQTFGC…LPSLIDDAAS (117 aa). Positions 14, 50, 84, 157, 161, and 164 each coordinate [4Fe-4S] cluster. Residues 143–373 form the Radical SAM core domain; sequence REGRISAFIP…IDLQQEISAE (231 aa). Residues 376 to 439 form the TRAM domain; that stretch reads RRQVGTVAEV…SATLSGSREG (64 aa).

Belongs to the methylthiotransferase family. MiaB subfamily. In terms of assembly, monomer. [4Fe-4S] cluster is required as a cofactor.

It localises to the cytoplasm. It carries out the reaction N(6)-dimethylallyladenosine(37) in tRNA + (sulfur carrier)-SH + AH2 + 2 S-adenosyl-L-methionine = 2-methylsulfanyl-N(6)-dimethylallyladenosine(37) in tRNA + (sulfur carrier)-H + 5'-deoxyadenosine + L-methionine + A + S-adenosyl-L-homocysteine + 2 H(+). In terms of biological role, catalyzes the methylthiolation of N6-(dimethylallyl)adenosine (i(6)A), leading to the formation of 2-methylthio-N6-(dimethylallyl)adenosine (ms(2)i(6)A) at position 37 in tRNAs that read codons beginning with uridine. This is tRNA-2-methylthio-N(6)-dimethylallyladenosine synthase from Chlorobium luteolum (strain DSM 273 / BCRC 81028 / 2530) (Pelodictyon luteolum).